Consider the following 478-residue polypeptide: Glutamyl-tRNA(Gln) amidotransferase subunit A (478 aa).

Catalysis depends on charge relay system residues Lys72 and Ser147. Catalysis depends on Ser171, which acts as the Acyl-ester intermediate.

This sequence belongs to the amidase family. GatA subfamily. Heterotrimer of A, B and C subunits.

It carries out the reaction L-glutamyl-tRNA(Gln) + L-glutamine + ATP + H2O = L-glutaminyl-tRNA(Gln) + L-glutamate + ADP + phosphate + H(+). In terms of biological role, allows the formation of correctly charged Gln-tRNA(Gln) through the transamidation of misacylated Glu-tRNA(Gln) in organisms which lack glutaminyl-tRNA synthetase. The reaction takes place in the presence of glutamine and ATP through an activated gamma-phospho-Glu-tRNA(Gln). The chain is Glutamyl-tRNA(Gln) amidotransferase subunit A from Saccharolobus solfataricus (strain ATCC 35092 / DSM 1617 / JCM 11322 / P2) (Sulfolobus solfataricus).